Reading from the N-terminus, the 669-residue chain is Probable serine/threonine-protein kinase DDB_G0291918 (669 aa).

Residues 13-360 form the Protein kinase domain; that stretch reads YNNIKELGRG…LKETLNHPFL (348 aa). ATP is bound by residues 19 to 27 and Lys42; that span reads LGRGVSGVV. Asp141 functions as the Proton acceptor in the catalytic mechanism. Residues 396-405 show a composition bias toward low complexity; sequence QNQQQQQQQQ. Disordered stretches follow at residues 396–518 and 530–550; these read QNQQ…APTF and FPKLLPPPTKDAPPLETMNWR. Residues 406–418 are compositionally biased toward polar residues; that stretch reads KSFSTSSLPQVNH. Low complexity-rich tracts occupy residues 419–449 and 457–494; these read NNDTNNNNNNNNNNNNNNNNNNNNNNNNNNN and QSNNSSSSSSSSSPPSPTISKSSPSSLSSSLSPSSSTD.

The protein belongs to the protein kinase superfamily. Ser/Thr protein kinase family.

The catalysed reaction is L-seryl-[protein] + ATP = O-phospho-L-seryl-[protein] + ADP + H(+). It carries out the reaction L-threonyl-[protein] + ATP = O-phospho-L-threonyl-[protein] + ADP + H(+). This chain is Probable serine/threonine-protein kinase DDB_G0291918, found in Dictyostelium discoideum (Social amoeba).